Here is a 440-residue protein sequence, read N- to C-terminus: Ribosomal protein uS12 methylthiotransferase RimO (440 aa).

Positions 6 to 116 constitute an MTTase N-terminal domain; the sequence is PKVGFVSLGC…VVTAVHEVVP (111 aa). [4Fe-4S] cluster-binding residues include Cys15, Cys51, Cys80, Cys149, Cys153, and Cys156. In terms of domain architecture, Radical SAM core spans 135–373; that stretch reads LTPRHYAYLK…MAHQQAISAA (239 aa). Residues 376–440 form the TRAM domain; sequence QLKVGKEIEV…DEYDLWAELV (65 aa).

This sequence belongs to the methylthiotransferase family. RimO subfamily. Requires [4Fe-4S] cluster as cofactor.

It localises to the cytoplasm. The catalysed reaction is L-aspartate(89)-[ribosomal protein uS12]-hydrogen + (sulfur carrier)-SH + AH2 + 2 S-adenosyl-L-methionine = 3-methylsulfanyl-L-aspartate(89)-[ribosomal protein uS12]-hydrogen + (sulfur carrier)-H + 5'-deoxyadenosine + L-methionine + A + S-adenosyl-L-homocysteine + 2 H(+). In terms of biological role, catalyzes the methylthiolation of an aspartic acid residue of ribosomal protein uS12. The sequence is that of Ribosomal protein uS12 methylthiotransferase RimO from Pseudomonas aeruginosa (strain UCBPP-PA14).